The chain runs to 409 residues: Failed axon connections homolog (409 aa).

A helical membrane pass occupies residues 68 to 88; that stretch reads YLTGGALLAAAAYLLHELLVI. A disordered region spans residues 372–393; the sequence is DEGAENSFSRTPDTDFTGHSLF.

The protein belongs to the FAX family.

Its subcellular location is the membrane. In terms of biological role, may play a role in axonal development. The protein is Failed axon connections homolog (Faxc) of Mus musculus (Mouse).